The primary structure comprises 804 residues: Phenylalanine--tRNA ligase beta subunit (804 aa).

In terms of domain architecture, tRNA-binding spans 39 to 155; sequence AEGLKKIVVG…ADVKPGEEVY (117 aa). The B5 domain maps to 408–483; that stretch reads RNPSVVKTTV…RIYGYDNLKS (76 aa). Asp-461, Asp-467, Glu-470, and Glu-471 together coordinate Mg(2+). The FDX-ACB domain occupies 711–804; that stretch reads PKFPAIERDL…LKESLKIKVR (94 aa).

The protein belongs to the phenylalanyl-tRNA synthetase beta subunit family. Type 1 subfamily. In terms of assembly, tetramer of two alpha and two beta subunits. Requires Mg(2+) as cofactor.

It localises to the cytoplasm. It catalyses the reaction tRNA(Phe) + L-phenylalanine + ATP = L-phenylalanyl-tRNA(Phe) + AMP + diphosphate + H(+). The polypeptide is Phenylalanine--tRNA ligase beta subunit (Lactobacillus johnsonii (strain CNCM I-12250 / La1 / NCC 533)).